The following is a 284-amino-acid chain: Tropomyosin (284 aa).

A coiled-coil region spans residues 1–273 (MEAIKKKMQA…KEKYKSISDE (273 aa)).

The protein belongs to the tropomyosin family. As to quaternary structure, homodimer. As to expression, ubiquitous, but especially prevalent in the anterior muscle bundles associated with legs. Expression in the mid and posterior regions is probably related to the numerous, small muscle bundles associated with the digestive and reproductive systems (at protein level).

In terms of biological role, tropomyosin, in association with the troponin complex, plays a central role in the calcium dependent regulation of muscle contraction. The protein is Tropomyosin of Psoroptes ovis (Sheep scab mite).